A 158-amino-acid chain; its full sequence is Transcription antitermination protein NusB (158 aa).

Residues 1-13 show a composition bias toward polar residues; sequence MSEAGDTSPQPGK. Positions 1-24 are disordered; that stretch reads MSEAGDTSPQPGKTGQPKAGDRRR.

Belongs to the NusB family.

Functionally, involved in transcription antitermination. Required for transcription of ribosomal RNA (rRNA) genes. Binds specifically to the boxA antiterminator sequence of the ribosomal RNA (rrn) operons. This Marinobacter nauticus (strain ATCC 700491 / DSM 11845 / VT8) (Marinobacter aquaeolei) protein is Transcription antitermination protein NusB.